The chain runs to 437 residues: Cobyrinate a,c-diamide synthase (437 aa).

The GATase cobBQ-type domain maps to 241–430 (KIAVAKDEAF…AHVHFFGNLD (190 aa)). C323 serves as the catalytic Nucleophile.

The protein belongs to the CobB/CbiA family. Mg(2+) serves as cofactor.

The catalysed reaction is cob(II)yrinate + 2 L-glutamine + 2 ATP + 2 H2O = cob(II)yrinate a,c diamide + 2 L-glutamate + 2 ADP + 2 phosphate + 2 H(+). It functions in the pathway cofactor biosynthesis; adenosylcobalamin biosynthesis; cob(II)yrinate a,c-diamide from sirohydrochlorin (anaerobic route): step 10/10. Catalyzes the ATP-dependent amidation of the two carboxylate groups at positions a and c of cobyrinate, using either L-glutamine or ammonia as the nitrogen source. This chain is Cobyrinate a,c-diamide synthase, found in Clostridium acetobutylicum (strain ATCC 824 / DSM 792 / JCM 1419 / IAM 19013 / LMG 5710 / NBRC 13948 / NRRL B-527 / VKM B-1787 / 2291 / W).